The primary structure comprises 314 residues: MPLEQRSQHCKPEEGLEARGEALGLVGAQAPATEEQEAASSSSTLVEVTLGEVPAAESPDPPQSPQGASSLPTTMNYPLWSQSYEDSSNQEEEGPSTFPDLESEFQAALSRKVAKLVHFLLLKYRAREPVTKAEMLGSVVGNWQYFFPVIFSKASDSLQLVFGIELMEVDPIGHVYIFATCLGLSYDGLLGDNQIMPKTGFLIIILAIIAKEGDCAPEEKIWEELSVLEVFEGREDSIFGDPKKLLTQYFVQENYLEYRQVPGSDPACYEFLWGPRALIETSYVKVLHHMVKISGGPRISYPLLHEWALREGEE.

The span at 1-20 shows a compositional bias: basic and acidic residues; the sequence is MPLEQRSQHCKPEEGLEARG. A disordered region spans residues 1-99; that stretch reads MPLEQRSQHC…QEEEGPSTFP (99 aa). Positions 21 to 44 are enriched in low complexity; the sequence is EALGLVGAQAPATEEQEAASSSST. A compositionally biased stretch (polar residues) spans 65–87; it reads PQGASSLPTTMNYPLWSQSYEDS. The region spanning 109–308 is the MAGE domain; that stretch reads LSRKVAKLVH…ISYPLLHEWA (200 aa).

As to quaternary structure, interacts with TRIM28. Post-translationally, ubiquitinated by the DCX(DCAF12) complex specifically recognizes the diglutamate (Glu-Glu) at the C-terminus, leading to its degradation. Expressed in many tumors of several types, such as melanoma, head and neck squamous cell carcinoma, lung carcinoma and breast carcinoma, but not in normal tissues except for testes.

Its function is as follows. Activator of ubiquitin ligase activity of RING-type zinc finger-containing E3 ubiquitin-protein ligases that acts as a repressor of autophagy. May enhance ubiquitin ligase activity of TRIM28 and stimulate p53/TP53 ubiquitination by TRIM28. Proposed to act through recruitment and/or stabilization of the Ubl-conjugating enzyme (E2) at the E3:substrate complex. May play a role in tumor transformation or aspects of tumor progression. In vitro promotes cell viability in melanoma cell lines. The polypeptide is Melanoma-associated antigen 6 (Homo sapiens (Human)).